The primary structure comprises 291 residues: Pituitary-specific positive transcription factor 1 (291 aa).

The 9aaTAD motif lies at 5-13; that stretch reads AFTSADTFI. The 75-residue stretch at 124–198 folds into the POU-specific domain; sequence MDSPEIRELE…ILSKWLEEAE (75 aa). Residues 214–273 constitute a DNA-binding region (homeobox); it reads KRKRRTTISIAAKDALERHFGEQNKPSSQEIMRMAEELNLEKEVVRVWFCNRRQREKRVK.

The protein belongs to the POU transcription factor family. Class-1 subfamily. Interacts with PITX1. Interacts with LHX3. Interacts with ELK1.

It is found in the nucleus. Functionally, transcription factor involved in the specification of the lactotrope, somatotrope, and thyrotrope phenotypes in the developing anterior pituitary. Specifically binds to the consensus sequence 5'-TAAAT-3'. Activates growth hormone and prolactin genes. The sequence is that of Pituitary-specific positive transcription factor 1 (POU1F1) from Homo sapiens (Human).